The primary structure comprises 206 residues: Small ribosomal subunit protein uS4 (206 aa).

The 61-residue stretch at 96–156 (SRLDNIVYRL…KKSKNQLRIK (61 aa)) folds into the S4 RNA-binding domain.

Belongs to the universal ribosomal protein uS4 family. In terms of assembly, part of the 30S ribosomal subunit. Contacts protein S5. The interaction surface between S4 and S5 is involved in control of translational fidelity.

In terms of biological role, one of the primary rRNA binding proteins, it binds directly to 16S rRNA where it nucleates assembly of the body of the 30S subunit. Functionally, with S5 and S12 plays an important role in translational accuracy. This Buchnera aphidicola subsp. Cinara cedri (strain Cc) protein is Small ribosomal subunit protein uS4.